The chain runs to 237 residues: Uridylate kinase (237 aa).

Residue 11–14 coordinates ATP; it reads KLSG. Residue glycine 53 coordinates UMP. ATP is bound by residues glycine 54 and arginine 58. Residues aspartate 73 and 134-141 contribute to the UMP site; that span reads TGNPFFTT. ATP-binding residues include threonine 161, tyrosine 167, and aspartate 170.

Belongs to the UMP kinase family. Homohexamer.

It is found in the cytoplasm. It carries out the reaction UMP + ATP = UDP + ADP. The protein operates within pyrimidine metabolism; CTP biosynthesis via de novo pathway; UDP from UMP (UMPK route): step 1/1. With respect to regulation, inhibited by UTP. Functionally, catalyzes the reversible phosphorylation of UMP to UDP. This is Uridylate kinase from Burkholderia mallei (strain NCTC 10247).